The primary structure comprises 332 residues: MPNEVYDVTIIGGGPIGLFSAFYSGLRSMKTKIIDAEPDVGGKVRYFFPEKIIRDIGGIPAITGANLVANLKEQAETFHPTIVCNERVVDVTKLTDGVFQLTSHNGSIHFSKTVVIATGSGTFEVNKLEAMHVDDFPLAINYDVKNLEQFRDKIVTVSGGGNSAIDWAQTLEPIAKKVHLIYRGEDFKAHEESVRELKNSRVEIHIHHEIKELIGANNQLASIKICCNQTQVTKTIETEALFINHGVKVDLGTMAEWGFELADFGIVVDDEMKTTVPGIFACGDSATYSRKIRIIAAGLHEGPIAINSAKKYLEPTARDEAMISTHHESFIG.

D35, K43, F48, V88, F123, D284, and T325 together coordinate FAD.

It belongs to the ferredoxin--NADP reductase type 2 family. As to quaternary structure, homodimer. FAD is required as a cofactor.

The enzyme catalyses 2 reduced [2Fe-2S]-[ferredoxin] + NADP(+) + H(+) = 2 oxidized [2Fe-2S]-[ferredoxin] + NADPH. This Listeria innocua serovar 6a (strain ATCC BAA-680 / CLIP 11262) protein is Ferredoxin--NADP reductase 1.